The primary structure comprises 104 residues: Complex III assembly factor LYRM7 (104 aa).

Position 60 is a phosphoserine (Ser60).

Belongs to the complex I LYR family. In terms of assembly, interacts with UQCRFS1.

Its subcellular location is the mitochondrion matrix. Its function is as follows. Assembly factor required for Rieske Fe-S protein UQCRFS1 incorporation into the cytochrome b-c1 (CIII) complex. Functions as a chaperone, binding to this subunit within the mitochondrial matrix and stabilizing it prior to its translocation and insertion into the late CIII dimeric intermediate within the mitochondrial inner membrane. The sequence is that of Complex III assembly factor LYRM7 (Lyrm7) from Mus musculus (Mouse).